A 379-amino-acid chain; its full sequence is Carbamoyl phosphate synthase small chain (379 aa).

A CPSase region spans residues 1–184 (MVSLYLENGL…LDYKPFDEKN (184 aa)). L-glutamine is bound by residues Ser44, Gly240, and Gly242. Residues 188 to 378 (TIAVLDFGAK…VKLLENFPTR (191 aa)) form the Glutamine amidotransferase type-1 domain. Cys268 functions as the Nucleophile in the catalytic mechanism. 4 residues coordinate L-glutamine: Leu269, Gln272, Asn310, and Tyr313. Catalysis depends on residues His351 and Glu353.

The protein belongs to the CarA family. In terms of assembly, composed of two chains; the small (or glutamine) chain promotes the hydrolysis of glutamine to ammonia, which is used by the large (or ammonia) chain to synthesize carbamoyl phosphate. Tetramer of heterodimers (alpha,beta)4.

The catalysed reaction is hydrogencarbonate + L-glutamine + 2 ATP + H2O = carbamoyl phosphate + L-glutamate + 2 ADP + phosphate + 2 H(+). It carries out the reaction L-glutamine + H2O = L-glutamate + NH4(+). It functions in the pathway amino-acid biosynthesis; L-arginine biosynthesis; carbamoyl phosphate from bicarbonate: step 1/1. The protein operates within pyrimidine metabolism; UMP biosynthesis via de novo pathway; (S)-dihydroorotate from bicarbonate: step 1/3. Functionally, small subunit of the glutamine-dependent carbamoyl phosphate synthetase (CPSase). CPSase catalyzes the formation of carbamoyl phosphate from the ammonia moiety of glutamine, carbonate, and phosphate donated by ATP, constituting the first step of 2 biosynthetic pathways, one leading to arginine and/or urea and the other to pyrimidine nucleotides. The small subunit (glutamine amidotransferase) binds and cleaves glutamine to supply the large subunit with the substrate ammonia. The sequence is that of Carbamoyl phosphate synthase small chain from Helicobacter acinonychis (strain Sheeba).